Consider the following 98-residue polypeptide: NADH-ubiquinone oxidoreductase chain 4L (98 aa).

The next 3 membrane-spanning stretches (helical) occupy residues 1–21 (MSMV…GLLM), 29–49 (SLLC…VTIL), and 61–81 (IILL…LVMV).

It belongs to the complex I subunit 4L family. Core subunit of respiratory chain NADH dehydrogenase (Complex I) which is composed of 45 different subunits.

It is found in the mitochondrion inner membrane. The catalysed reaction is a ubiquinone + NADH + 5 H(+)(in) = a ubiquinol + NAD(+) + 4 H(+)(out). In terms of biological role, core subunit of the mitochondrial membrane respiratory chain NADH dehydrogenase (Complex I) which catalyzes electron transfer from NADH through the respiratory chain, using ubiquinone as an electron acceptor. Part of the enzyme membrane arm which is embedded in the lipid bilayer and involved in proton translocation. This Callorhinus ursinus (Northern fur seal) protein is NADH-ubiquinone oxidoreductase chain 4L (MT-ND4L).